We begin with the raw amino-acid sequence, 386 residues long: Zinc finger protein 385A (386 aa).

The segment at 74 to 98 (ISCNICQIRFNSQSQAEAHYKGNRH) adopts a Matrin-type 1 zinc-finger fold. The disordered stretch occupies residues 90–193 (EAHYKGNRHA…ASLPGGSKEE (104 aa)). Residues 103-121 (KGIEAAKTRGREPGVREPG) show a composition bias toward basic and acidic residues. The necessary for binding to ITPR1, CEBPA and p53/TP53 mRNAs stretch occupies residues 145–351 (NGLGPAPGSP…AGSPLSLRPA (207 aa)). Residue serine 185 is modified to Phosphoserine. Residues 201 to 225 (LYCALCKVAVNSLSQLEAHNKGTKH) form a Matrin-type 2 zinc finger. Threonine 248 carries the phosphothreonine modification. The Matrin-type 3 zinc-finger motif lies at 261–285 (FHCEICNVKVNSEVQLKQHISSRRH). A disordered region spans residues 279-309 (HISSRRHRDGVAGKPNPLLSRHKKSRGAGEL).

As to quaternary structure, interacts with ELAVL1; the interaction is indirect, mRNA-dependent and may regulate p53/TP53 expression. Interacts with p53/TP53; the interaction is direct and enhances p53/TP53 transactivation functions on cell-cycle arrest target genes, resulting in growth arrest. Ubiquitinated upon prolonged exposure to genotoxic stress, which leads to proteasomal degradation of ZNF385A and releases p53/TP53 from cell-cycle arrest target gene promoters. As to expression, expressed predominantly in the retina.

Its subcellular location is the cytoplasm. The protein localises to the nucleus. The protein resides in the nucleolus. It is found in the cell projection. It localises to the dendrite. Its function is as follows. RNA-binding protein that affects the localization and the translation of a subset of mRNA. May play a role in adipogenesis through binding to the 3'-UTR of CEBPA mRNA and regulation of its translation. Targets ITPR1 mRNA to dendrites in Purkinje cells, and may regulate its activity-dependent translation. With ELAVL1, binds the 3'-UTR of p53/TP53 mRNAs to control their nuclear export induced by CDKN2A. Hence, may regulate p53/TP53 expression and mediate in part the CDKN2A anti-proliferative activity. May also bind CCNB1 mRNA. Alternatively, may also regulate p53/TP53 activity through direct protein-protein interaction. Interacts with p53/TP53 and promotes cell-cycle arrest over apoptosis enhancing preferentially the DNA binding and transactivation of p53/TP53 on cell-cycle arrest target genes over proapoptotic target genes. May also regulate the ubiquitination and stability of CDKN1A promoting DNA damage-induced cell cycle arrest. Also plays a role in megakaryocytes differentiation. The sequence is that of Zinc finger protein 385A (ZNF385A) from Homo sapiens (Human).